A 518-amino-acid chain; its full sequence is ATP synthase F(1) complex catalytic subunit beta, mitochondrial (518 aa).

ADP is bound by residues glycine 199, valine 200, glycine 201, lysine 202, threonine 203, and valine 204. Position 199 (glycine 199) interacts with ATP. Phosphate is bound by residues glycine 199, valine 200, glycine 201, lysine 202, and threonine 203. 4 residues coordinate ATP: glycine 201, lysine 202, threonine 203, and valine 204. Threonine 203 contacts Mg(2+). Glutamate 228 contacts Mg(2+). ATP is bound at residue arginine 229.

Belongs to the ATPase alpha/beta chains family. Homotrimer. Component of the ATP synthase complex composed at least of ATP5F1A/subunit alpha, ATP5F1B/subunit beta, ATP5MC1/subunit c (homooctomer), MT-ATP6/subunit a, MT-ATP8/subunit 8, ATP5ME/subunit e, ATP5MF/subunit f, ATP5MG/subunit g, ATP5MK/subunit k, ATP5MJ/subunit j, ATP5F1C/subunit gamma, ATP5F1D/subunit delta, ATP5F1E/subunit epsilon, ATP5PF/subunit F6, ATP5PB/subunit b, ATP5PD/subunit d, ATP5PO/subunit OSCP. ATP synthase complex consists of a soluble F(1) head domain (subunits alpha(3) and beta(3)) - the catalytic core - and a membrane F(0) domain - the membrane proton channel (subunits c, a, 8, e, f, g, k and j). These two domains are linked by a central stalk (subunits gamma, delta, and epsilon) rotating inside the F1 region and a stationary peripheral stalk (subunits F6, b, d, and OSCP).

The protein resides in the mitochondrion inner membrane. It carries out the reaction ATP + H2O + 4 H(+)(in) = ADP + phosphate + 5 H(+)(out). Catalytic subunit beta, of the mitochondrial membrane ATP synthase complex (F(1)F(0) ATP synthase or Complex V) that produces ATP from ADP in the presence of a proton gradient across the membrane which is generated by electron transport complexes of the respiratory chain. ATP synthase complex consist of a soluble F(1) head domain - the catalytic core - and a membrane F(1) domain - the membrane proton channel. These two domains are linked by a central stalk rotating inside the F(1) region and a stationary peripheral stalk. During catalysis, ATP synthesis in the catalytic domain of F(1) is coupled via a rotary mechanism of the central stalk subunits to proton translocation. In vivo, can only synthesize ATP although its ATP hydrolase activity can be activated artificially in vitro. With the subunit alpha (ATP5F1A), forms the catalytic core in the F(1) domain. The sequence is that of ATP synthase F(1) complex catalytic subunit beta, mitochondrial from Cyprinus carpio (Common carp).